Here is a 207-residue protein sequence, read N- to C-terminus: Thiamine-phosphate synthase (207 aa).

4-amino-2-methyl-5-(diphosphooxymethyl)pyrimidine is bound by residues 38–42 (QYRAK) and asparagine 70. Mg(2+) contacts are provided by aspartate 71 and aspartate 90. Threonine 109 is a 4-amino-2-methyl-5-(diphosphooxymethyl)pyrimidine binding site. 135–137 (TNS) serves as a coordination point for 2-[(2R,5Z)-2-carboxy-4-methylthiazol-5(2H)-ylidene]ethyl phosphate. Position 138 (lysine 138) interacts with 4-amino-2-methyl-5-(diphosphooxymethyl)pyrimidine. 2-[(2R,5Z)-2-carboxy-4-methylthiazol-5(2H)-ylidene]ethyl phosphate-binding positions include glycine 165 and 185-186 (IS).

The protein belongs to the thiamine-phosphate synthase family. The cofactor is Mg(2+).

It catalyses the reaction 2-[(2R,5Z)-2-carboxy-4-methylthiazol-5(2H)-ylidene]ethyl phosphate + 4-amino-2-methyl-5-(diphosphooxymethyl)pyrimidine + 2 H(+) = thiamine phosphate + CO2 + diphosphate. The catalysed reaction is 2-(2-carboxy-4-methylthiazol-5-yl)ethyl phosphate + 4-amino-2-methyl-5-(diphosphooxymethyl)pyrimidine + 2 H(+) = thiamine phosphate + CO2 + diphosphate. It carries out the reaction 4-methyl-5-(2-phosphooxyethyl)-thiazole + 4-amino-2-methyl-5-(diphosphooxymethyl)pyrimidine + H(+) = thiamine phosphate + diphosphate. It participates in cofactor biosynthesis; thiamine diphosphate biosynthesis; thiamine phosphate from 4-amino-2-methyl-5-diphosphomethylpyrimidine and 4-methyl-5-(2-phosphoethyl)-thiazole: step 1/1. In terms of biological role, condenses 4-methyl-5-(beta-hydroxyethyl)thiazole monophosphate (THZ-P) and 2-methyl-4-amino-5-hydroxymethyl pyrimidine pyrophosphate (HMP-PP) to form thiamine monophosphate (TMP). The protein is Thiamine-phosphate synthase of Clostridium perfringens (strain SM101 / Type A).